A 175-amino-acid chain; its full sequence is Cytochrome c homolog (175 aa).

At 1 to 8 (MTGKELNK) the chain is on the cytoplasmic side. A helical; Signal-anchor membrane pass occupies residues 9 to 29 (IVAAILFASLIAMIVRFVANI). Residues 30 to 175 (LYKPNLQVLN…LFLKNYVHDK (146 aa)) lie on the Periplasmic side of the membrane. Heme c is bound by residues Cys-84, Cys-87, His-88, and Met-150.

Belongs to the cytochrome c family. Binds 1 heme c group covalently per subunit.

The protein localises to the cell membrane. Functionally, may be involved in electron transfer from bc1 complex to aa3. The polypeptide is Cytochrome c homolog (cycM) (Rickettsia typhi (strain ATCC VR-144 / Wilmington)).